Consider the following 364-residue polypeptide: Zinc finger protein CONSTANS-LIKE 12 (364 aa).

4 residues coordinate Zn(2+): C5, C8, C28, and H33. The B box-type 1; atypical zinc-finger motif lies at 5 to 47 (CDHCATSQALIYCKSDLAKLCLNCDVHVHSANPLSHRHIRSLI). The B box-type 2; degenerate zinc-finger motif lies at 48–88 (CEKCFSQPAAIRCLDEKVSYCQGCHWHESNCSELGHRVQSL). The CCT domain occupies 280 to 322 (QDCGMSPGFIMSEAPWETNFEVSCPQARNEAKLRYKEKKLKRS).

This sequence belongs to the CONSTANS family.

It is found in the nucleus. This Arabidopsis thaliana (Mouse-ear cress) protein is Zinc finger protein CONSTANS-LIKE 12 (COL12).